Reading from the N-terminus, the 1785-residue chain is 1,3-beta-glucan synthase component FKS3 (1785 aa).

8 consecutive transmembrane segments (helical) span residues 337 to 357 (FWII…PTLY), 375 to 395 (LSVI…ATVF), 415 to 435 (IGLL…LGFF), 444 to 464 (AYIV…FFAV), 508 to 528 (LWVF…TLSL), 547 to 567 (YLLG…LMLL), 572 to 592 (LFFL…SIVL), and 712 to 732 (LATP…TVLV). 2 stretches are compositionally biased toward basic and acidic residues: residues 791 to 801 (ESSHDEDRLEI) and 815 to 824 (DHTESRKLPT). A disordered region spans residues 791 to 824 (ESSHDEDRLEIPDALYDPRSSPLSDHTESRKLPT). N-linked (GlcNAc...) asparagine glycosylation is found at N844, N874, N955, N1002, and N1170. The next 3 helical transmembrane spans lie at 1215–1235 (LFIS…GALN), 1268–1288 (VSIF…PLLI), and 1303–1323 (FLHH…QVYS). A glycan (N-linked (GlcNAc...) asparagine) is linked at N1360. 5 helical membrane passes run 1370 to 1390 (FFML…WFWI), 1394 to 1414 (SMCF…DFFI), 1475 to 1495 (FAEL…FSFI), 1514 to 1534 (LLVT…LFWV), and 1549 to 1569 (AGAV…LLDF). An N-linked (GlcNAc...) asparagine glycan is attached at N1579. 3 helical membrane passes run 1585 to 1605 (ILLI…TTIF), 1655 to 1675 (FFLG…PFID), and 1713 to 1733 (FSLY…PFFA). N1761 is a glycosylation site (N-linked (GlcNAc...) asparagine).

The protein belongs to the glycosyltransferase 48 family. N-glycosylated.

The protein localises to the mitochondrion. It is found in the membrane. The enzyme catalyses [(1-&gt;3)-beta-D-glucosyl](n) + UDP-alpha-D-glucose = [(1-&gt;3)-beta-D-glucosyl](n+1) + UDP + H(+). In terms of biological role, required for spore wall assembly. The chain is 1,3-beta-glucan synthase component FKS3 (FKS3) from Saccharomyces cerevisiae (strain ATCC 204508 / S288c) (Baker's yeast).